The chain runs to 236 residues: 1-(5-phosphoribosyl)-5-[(5-phosphoribosylamino)methylideneamino] imidazole-4-carboxamide isomerase (236 aa).

Catalysis depends on Asp8, which acts as the Proton acceptor. Asp128 functions as the Proton donor in the catalytic mechanism.

This sequence belongs to the HisA/HisF family.

Its subcellular location is the cytoplasm. It carries out the reaction 1-(5-phospho-beta-D-ribosyl)-5-[(5-phospho-beta-D-ribosylamino)methylideneamino]imidazole-4-carboxamide = 5-[(5-phospho-1-deoxy-D-ribulos-1-ylimino)methylamino]-1-(5-phospho-beta-D-ribosyl)imidazole-4-carboxamide. It functions in the pathway amino-acid biosynthesis; L-histidine biosynthesis; L-histidine from 5-phospho-alpha-D-ribose 1-diphosphate: step 4/9. The chain is 1-(5-phosphoribosyl)-5-[(5-phosphoribosylamino)methylideneamino] imidazole-4-carboxamide isomerase from Nitrosopumilus maritimus (strain SCM1).